A 496-amino-acid polypeptide reads, in one-letter code: Glycerol kinase (496 aa).

T12 contacts ADP. 3 residues coordinate ATP: T12, T13, and S14. T12 is a binding site for sn-glycerol 3-phosphate. R16 is a binding site for ADP. Sn-glycerol 3-phosphate is bound by residues R82, E83, and Y134. Glycerol-binding residues include R82, E83, and Y134. H230 is subject to Phosphohistidine; by HPr. D244 contributes to the sn-glycerol 3-phosphate binding site. Glycerol is bound by residues D244 and Q245. Residues T266 and G309 each contribute to the ADP site. ATP is bound by residues T266, G309, Q313, and G410. ADP-binding residues include G410 and N414.

It belongs to the FGGY kinase family. As to quaternary structure, homotetramer and homodimer (in equilibrium). The phosphoenolpyruvate-dependent sugar phosphotransferase system (PTS), including enzyme I, and histidine-containing protein (HPr) are required for the phosphorylation, which leads to the activation of the enzyme.

The enzyme catalyses glycerol + ATP = sn-glycerol 3-phosphate + ADP + H(+). It participates in polyol metabolism; glycerol degradation via glycerol kinase pathway; sn-glycerol 3-phosphate from glycerol: step 1/1. Activated by phosphorylation and inhibited by fructose 1,6-bisphosphate (FBP). Functionally, key enzyme in the regulation of glycerol uptake and metabolism. Catalyzes the phosphorylation of glycerol to yield sn-glycerol 3-phosphate. This is Glycerol kinase from Bacillus velezensis (strain DSM 23117 / BGSC 10A6 / LMG 26770 / FZB42) (Bacillus amyloliquefaciens subsp. plantarum).